The chain runs to 346 residues: Heat-inducible transcription repressor HrcA (346 aa).

Belongs to the HrcA family.

Its function is as follows. Negative regulator of class I heat shock genes (grpE-dnaK-dnaJ and groELS operons). Prevents heat-shock induction of these operons. The protein is Heat-inducible transcription repressor HrcA of Erythrobacter litoralis (strain HTCC2594).